Reading from the N-terminus, the 623-residue chain is Dynein axonemal intermediate chain 2 (623 aa).

WD repeat units follow at residues 214–254, 261–302, 362–401, 405–445, and 450–489; these read KPLS…LVAE, SHRD…EPIE, GHHGPIYALQRNPFYPKNFLTVGDWTARIWSEDSRESSIM, YHMA…CDPA, and VCDDPLFCLRVQDNGCLIACGSELGTTTLLEVSSSLSTLQ. Residues 565–602 form a disordered region; it reads AEALKKKPKPRKKSSVKVEAEEEVEENVGEEEEAGGII. Over residues 570 to 579 the composition is skewed to basic residues; sequence KKPKPRKKSS. A compositionally biased stretch (acidic residues) spans 584–598; that stretch reads AEEEVEENVGEEEEA.

Belongs to the dynein intermediate chain family. As to quaternary structure, consists of at least two heavy chains and a number of intermediate and light chains. Interacts with DNAAF2. Interacts with DNAAF6/PIH1D3. Interacts with HEATR2; probably involved in outer arm dynein assembly. Interacts with CFAP53. In terms of tissue distribution, predominantly expressed in ovary, testis and lung.

Its subcellular location is the cytoplasm. It localises to the cytoskeleton. It is found in the cilium axoneme. The protein localises to the dynein axonemal particle. Its function is as follows. Part of the dynein complex of respiratory cilia. In Mus musculus (Mouse), this protein is Dynein axonemal intermediate chain 2 (Dnai2).